A 278-amino-acid chain; its full sequence is Casein kinase II subunit beta (278 aa).

Disordered regions lie at residues 1–22 (MSQE…DSGA) and 78–111 (DEEE…RNKS). Ser-2 is modified (N-acetylserine). Ser-2 is subject to Phosphoserine. The segment covering 78-94 (DEEEDEDDVVEEDEVDQ) has biased composition (acidic residues).

This sequence belongs to the casein kinase 2 subunit beta family. Tetramer composed of an alpha subunit, an alpha' subunit, one beta subunit and one beta' subunit. Interacts with FACT subunits POB3 and SPT16. interacts with YTA7. Phosphorylated by alpha subunit.

In terms of biological role, regulatory subunit of casein kinase II/CK2. As part of the kinase complex regulates the basal catalytic activity of the alpha subunit a constitutively active serine/threonine-protein kinase that phosphorylates a large number of substrates containing acidic residues C-terminal to the phosphorylated serine or threonine. The sequence is that of Casein kinase II subunit beta (CKB1) from Saccharomyces cerevisiae (strain ATCC 204508 / S288c) (Baker's yeast).